The chain runs to 103 residues: Large ribosomal subunit protein uL23 (103 aa).

Belongs to the universal ribosomal protein uL23 family. In terms of assembly, part of the 50S ribosomal subunit. Contacts protein L29, and trigger factor when it is bound to the ribosome.

Its function is as follows. One of the early assembly proteins it binds 23S rRNA. One of the proteins that surrounds the polypeptide exit tunnel on the outside of the ribosome. Forms the main docking site for trigger factor binding to the ribosome. This is Large ribosomal subunit protein uL23 from Chlorobaculum tepidum (strain ATCC 49652 / DSM 12025 / NBRC 103806 / TLS) (Chlorobium tepidum).